The chain runs to 589 residues: Transmembrane 9 superfamily member 3 (589 aa).

The N-terminal stretch at 1 to 28 (MRPLPGALGVAAAAALWLLLLLLPRTRA) is a signal peptide. Asn-174 carries an N-linked (GlcNAc...) asparagine glycan. A run of 5 helical transmembrane segments spans residues 224-244 (FSIF…SMIL), 294-314 (LIGS…VAMI), 328-348 (AIFV…SLYA), 360-380 (FIGA…INFI), and 389-409 (AIPF…ILPL). An N-linked (GlcNAc...) asparagine glycan is attached at Asn-419. The next 4 helical transmembrane spans lie at 449 to 469 (IVCL…YFIF), 482 to 502 (GFMM…TIVC), 519 to 539 (FLSA…YYFF), and 551 to 571 (FYFG…GAIG).

Belongs to the nonaspanin (TM9SF) (TC 9.A.2) family.

The protein resides in the membrane. The chain is Transmembrane 9 superfamily member 3 (TM9SF3) from Homo sapiens (Human).